The chain runs to 811 residues: Metal transporter cnnm-1 (811 aa).

The first 24 residues, Met1–Ala24, serve as a signal peptide directing secretion. N-linked (GlcNAc...) asparagine glycosylation is found at Asn20, Asn49, Asn61, and Asn122. Topologically, residues Gln25–Gln204 are extracellular. In terms of domain architecture, CNNM transmembrane spans Tyr197–Leu376. A helical transmembrane segment spans residues Ile205 to Leu225. Residues Met226 to Asn259 are Cytoplasmic-facing. A helical membrane pass occupies residues Leu260 to Met280. At Gly281 to Thr284 the chain is on the extracellular side. The helical transmembrane segment at Thr285–Pro305 threads the bilayer. At Gln306–Glu315 the chain is on the cytoplasmic side. Residues Val316 to Trp336 form a helical membrane-spanning segment. The Extracellular portion of the chain corresponds to Pro337–Pro811. 2 CBS domains span residues Met394–Val456 and Tyr462–Glu530. Asn435 and Asn453 each carry an N-linked (GlcNAc...) asparagine glycan. Residues Asp741–Gly760 form a disordered region. Residues Ser743–Leu755 show a composition bias toward low complexity. Residues Asn745 and Asn752 are each glycosylated (N-linked (GlcNAc...) asparagine).

This sequence belongs to the ACDP family. In terms of tissue distribution, highly expressed in the intestine and in neurons, but it is also expressed in a variety of tissues including the pharynx, hypodermis, rectum and in muscles.

Its subcellular location is the basolateral cell membrane. Probable metal transporter. Probably acts redundantly with the other metal transport proteins cnnm-2, cnnm-3, cnnm-4 and cnnm-5 to regulate Mg(2+) homeostasis. Promotes postembryonic gonad development by regulating Mg(2+) levels, probably via AMPK signaling. The chain is Metal transporter cnnm-1 from Caenorhabditis elegans.